Here is a 147-residue protein sequence, read N- to C-terminus: Hemoglobin subunit beta-1 (147 aa).

One can recognise a Globin domain in the interval 3-147; sequence KWSKTELTII…VVSALGKQYH (145 aa). His-64 and His-93 together coordinate heme b.

Belongs to the globin family. In terms of assembly, hb1 is a heterotetramer of two alpha chains and two beta-1 chains. In terms of tissue distribution, red blood cells.

Its function is as follows. Involved in oxygen transport from gills to the various peripheral tissues. The polypeptide is Hemoglobin subunit beta-1 (hbb1) (Cygnodraco mawsoni (Antarctic dragonfish)).